The sequence spans 213 residues: Orotate phosphoribosyltransferase (213 aa).

Lys-26 lines the 5-phospho-alpha-D-ribose 1-diphosphate pocket. 34–35 (FF) is an orotate binding site. Residues 72–73 (YK), Arg-99, Lys-100, Lys-103, His-105, and 124–132 (DDVITAGTA) contribute to the 5-phospho-alpha-D-ribose 1-diphosphate site. Thr-128 and Arg-156 together coordinate orotate.

The protein belongs to the purine/pyrimidine phosphoribosyltransferase family. PyrE subfamily. In terms of assembly, homodimer. Mg(2+) serves as cofactor.

The enzyme catalyses orotidine 5'-phosphate + diphosphate = orotate + 5-phospho-alpha-D-ribose 1-diphosphate. Its pathway is pyrimidine metabolism; UMP biosynthesis via de novo pathway; UMP from orotate: step 1/2. In terms of biological role, catalyzes the transfer of a ribosyl phosphate group from 5-phosphoribose 1-diphosphate to orotate, leading to the formation of orotidine monophosphate (OMP). The sequence is that of Orotate phosphoribosyltransferase from Shigella flexneri serotype 5b (strain 8401).